The chain runs to 1460 residues: Nucleoporin NUP159 (1460 aa).

Residues 1–500 (MSSLKDEVPT…SEQDATDPAS (500 aa)) are interaction with DBP5. The stretch at 228–231 (AVFG) is one FG 1 repeat. Residues 267–270 (PPFG) form a PXFG 1 repeat. The interval 401-435 (KSLSPTSEKIPIAGQEQEEKKKNNESSKALSENPF) is disordered. S404 bears the Phosphoserine mark. One copy of the SXFGXPXFG 1 repeat lies at 462–470 (STFGAPSFG). The segment at 483–504 (STSTGVASSEQDATDPASAKPV) is disordered. The interactions with CRM1 and GLE1 stretch occupies residues 497-701 (DPASAKPVFG…KPNTSTKPKT (205 aa)). Residues 503 to 511 (PVFGKPAFG) form an SXFGXPXFG 2; approximate repeat. The SXFGXPXFG 3; approximate repeat unit spans residues 522 to 530 (YAFGKPSFG). The PXFG 2 repeat unit spans residues 532-535 (PSFG). The segment at 533 to 619 (SFGSGKSSVE…SAFGTASSNE (87 aa)) is disordered. 4 stretches are compositionally biased toward polar residues: residues 536-546 (SGKSSVESPAS), 556-567 (GTPSFGSGNSSV), 582-593 (GTPSFGSGNSSA), and 607-619 (FGTS…SSNE). An SXFGXPXFG 4 repeat occupies 548–556 (SAFGKPSFG). Residues 558 to 561 (PSFG) form a PXFG 3 repeat. One copy of the SXFGXPXFG 5 repeat lies at 574–582 (SAFGKPSFG). The stretch at 584–587 (PSFG) is one PXFG 4 repeat. The stretch at 600–608 (SAFGKPSFG) is one SXFGXPXFG 6 repeat. The SXFG 1 repeat unit spans residues 610–613 (SAFG). Residues 624–632 (SIFGKAAFG) form an SXFGXPXFG 7; approximate repeat. Residues 642-645 (ELFG) form an FG 2 repeat. Residues 647 to 704 (NFTISKPTVDSPKEVDSTSPFPSSGDQSEDESKSDVDSSSTPFGTKPNTSTKPKTNAF) are disordered. Phosphoserine is present on S657. Positions 683–704 (DSSSTPFGTKPNTSTKPKTNAF) are enriched in low complexity. Residues 687 to 690 (TPFG) form an FG 3 repeat. An FXFG 1 repeat occupies 704–707 (FDFG). An SXFG 2 repeat occupies 709 to 712 (SSFG). Position 724 is a phosphoserine (S724). 3 stretches are compositionally biased toward polar residues: residues 727–750 (TFKF…FSSF), 757–767 (NGSLSKGSTSE), and 778–800 (NGPN…STRL). Residues 727–824 (TFKFGTQASP…EAQKSPIGKL (98 aa)) form a disordered region. The FXFG 2 repeat unit spans residues 728-731 (FKFG). Residues S735 and S745 each carry the phosphoserine modification. At T803 the chain carries Phosphothreonine. Acidic residues predominate over residues 804–814 (PSDEDGEVVEE). Phosphoserine occurs at positions 805 and 819. Residues 842 to 845 (PVFG) form a PXFG 5 repeat. Residues 861–889 (TNITKPSSTTPAFSFGNSTMNKSNTSTVS) are compositionally biased toward polar residues. The tract at residues 861–1092 (TNITKPSSTT…DINTDELPHG (232 aa)) is disordered. One copy of the FXFG 3 repeat lies at 873–876 (FSFG). S889 carries the phosphoserine modification. Residues 917 to 936 (AKEERTGESSKKDHNDDPKD) are compositionally biased toward basic and acidic residues. Phosphoserine is present on S940. Residues 942–958 (SEISVRTSESAFDTTAN) show a composition bias toward polar residues. Composition is skewed to basic and acidic residues over residues 960-1002 (EIPK…KNNE), 1017-1027 (ALKKDNEKENF), 1035-1061 (QFED…KESD), and 1068-1092 (SDRD…LPHG). An interaction with DYN2 region spans residues 1086–1175 (TDELPHGGEA…TCNFSVQTFE (90 aa)). Positions 1223–1460 (AEFTVLMENI…DFFKNLNMAK (238 aa)) are interaction with NUP82. Coiled coils occupy residues 1279–1320 (EQMQ…YLFL) and 1383–1418 (AKLA…GKKA).

In terms of assembly, component of the nuclear pore complex (NPC). NPC constitutes the exclusive means of nucleocytoplasmic transport. NPCs allow the passive diffusion of ions and small molecules and the active, nuclear transport receptor-mediated bidirectional transport of macromolecules such as proteins, RNAs, ribonucleoparticles (RNPs), and ribosomal subunits across the nuclear envelope. Due to its 8-fold rotational symmetry, all subunits are present with 8 copies or multiples thereof. Part of the NUP82 subcomplex, interacts with NUP82 through its C-terminal coiled coil. This subcomplex is the base for interactions with NUP116 and GLE2, with NUP42 and GLE1 and with DYN2. Interacts directly with DYN2. Interacts through its FG repeats with karyopherins, such as heterodimeric mRNA transport factor MEX67/MTR2, CRM1 (XPO1), and PSE1 (GSP1-GDP dependent). Interaction with CRM1 (XPO1) is GSP1-GTP dependent and stimulated by RNA1. NUP159 also interacts with GLE1 and the ATP-dependent RNA helicase DBP5.

The protein localises to the nucleus. Its subcellular location is the nuclear pore complex. The protein resides in the nucleus membrane. Functionally, functions as a component of the nuclear pore complex (NPC). NPC components, collectively referred to as nucleoporins (NUPs), can play the role of both NPC structural components and of docking or interaction partners for transiently associated nuclear transport factors. Active directional transport is assured by both, a Phe-Gly (FG) repeat affinity gradient for these transport factors across the NPC and a transport cofactor concentration gradient across the nuclear envelope (GSP1 and GSP2 GTPases associated predominantly with GTP in the nucleus, with GDP in the cytoplasm). NUP159 plays an important role in several nuclear export pathways including poly(A)+ RNA, pre-ribosome, and protein export. In Saccharomyces cerevisiae (strain ATCC 204508 / S288c) (Baker's yeast), this protein is Nucleoporin NUP159 (NUP159).